The sequence spans 249 residues: DNA polymerase sliding clamp (249 aa).

This sequence belongs to the PCNA family. In terms of assembly, homotrimer. The subunits circularize to form a toroid; DNA passes through its center. Replication factor C (RFC) is required to load the toroid on the DNA.

Its function is as follows. Sliding clamp subunit that acts as a moving platform for DNA processing. Responsible for tethering the catalytic subunit of DNA polymerase and other proteins to DNA during high-speed replication. The chain is DNA polymerase sliding clamp from Thermococcus sibiricus (strain DSM 12597 / MM 739).